A 264-amino-acid chain; its full sequence is MRQYLDLLEHVITTGTDRGDRTGTGTRSVFGYQMRFDLSQGFPVLTTKKLHLRSIIHELLWFLRGDTNVAYLKDNGVSIWDEWADENGELGPVYGYQWRSWPTPDGRHIDQIAALVEGLKTNPNSRRHIVSAWNPALVDEMALPPCHCLFQFYVADGKLSCQLYQRSADIFLGVPFNIASYALLTMMVAQVTGLEAGDFVHTLGDAHIYRNHFEQAQLQLTRTPKPLPKMEINPAVKDIFSFRFEDFELVGYEADSHIKAPVAV.

R21 is a binding site for dUMP. H51 is a binding site for (6R)-5,10-methylene-5,6,7,8-tetrahydrofolate. 126 to 127 (RR) lines the dUMP pocket. C146 acts as the Nucleophile in catalysis. Residues 166-169 (RSAD), N177, and 207-209 (HIY) contribute to the dUMP site. A (6R)-5,10-methylene-5,6,7,8-tetrahydrofolate-binding site is contributed by D169. Position 263 (A263) interacts with (6R)-5,10-methylene-5,6,7,8-tetrahydrofolate.

This sequence belongs to the thymidylate synthase family. Bacterial-type ThyA subfamily. In terms of assembly, homodimer.

The protein localises to the cytoplasm. It carries out the reaction dUMP + (6R)-5,10-methylene-5,6,7,8-tetrahydrofolate = 7,8-dihydrofolate + dTMP. It participates in pyrimidine metabolism; dTTP biosynthesis. Functionally, catalyzes the reductive methylation of 2'-deoxyuridine-5'-monophosphate (dUMP) to 2'-deoxythymidine-5'-monophosphate (dTMP) while utilizing 5,10-methylenetetrahydrofolate (mTHF) as the methyl donor and reductant in the reaction, yielding dihydrofolate (DHF) as a by-product. This enzymatic reaction provides an intracellular de novo source of dTMP, an essential precursor for DNA biosynthesis. The chain is Thymidylate synthase from Rhizobium meliloti (strain 1021) (Ensifer meliloti).